The sequence spans 207 residues: dTTP/UTP pyrophosphatase (207 aa).

Residue Asp-79 is the Proton acceptor of the active site.

This sequence belongs to the Maf family. YhdE subfamily. A divalent metal cation serves as cofactor.

The protein localises to the cytoplasm. It catalyses the reaction dTTP + H2O = dTMP + diphosphate + H(+). It carries out the reaction UTP + H2O = UMP + diphosphate + H(+). Functionally, nucleoside triphosphate pyrophosphatase that hydrolyzes dTTP and UTP. May have a dual role in cell division arrest and in preventing the incorporation of modified nucleotides into cellular nucleic acids. The chain is dTTP/UTP pyrophosphatase from Nitrobacter hamburgensis (strain DSM 10229 / NCIMB 13809 / X14).